The primary structure comprises 588 residues: Outer membrane transporter CdiB (588 aa).

A helical membrane pass occupies residues 33–55 (VVRYFSLLPCLCILSFSSPAAML). The POTRA domain occupies 104–179 (FTVSRIVVSG…GVLHITVMEG (76 aa)).

This sequence belongs to the TPS (TC 1.B.20) family.

Its subcellular location is the cell outer membrane. Its function is as follows. Potential outer membrane protein component of a toxin-immunity protein module, which functions as a cellular contact-dependent growth inhibition (CDI) system. CDI modules allow bacteria to communicate with and inhibit the growth of closely related neighboring bacteria in a contact-dependent fashion. This protein may be required for secretion and assembly of the CdiA toxin protein. In terms of biological role, probable member of a two partner secretion pathway (TPS) in which it mediates the secretion of CdiA. In Escherichia coli O6:K15:H31 (strain 536 / UPEC), this protein is Outer membrane transporter CdiB.